A 134-amino-acid polypeptide reads, in one-letter code: MRSFRAAELPDRNSIASISGLIGSDLIQMIRFDDMHSLFVGEEALRVGLTAFTIFDGYPIPLAGQIALLGGDGSKPYRSPSITMTEAARRFECCRPVLDPVFAPMDRVANKGLIVAGALESLQVRIDRRSPVLL.

In terms of biological role, could be involved directly or indirectly in exopolysaccharide synthesis. The sequence is that of Protein PsiB (psiB) from Rhizobium leguminosarum bv. phaseoli.